Reading from the N-terminus, the 151-residue chain is UPF0178 protein RD1_0321 (151 aa).

The protein belongs to the UPF0178 family.

This is UPF0178 protein RD1_0321 from Roseobacter denitrificans (strain ATCC 33942 / OCh 114) (Erythrobacter sp. (strain OCh 114)).